The chain runs to 175 residues: ATP-dependent protease subunit HslV (175 aa).

T2 is a catalytic residue. Na(+) contacts are provided by G158, C161, and T164.

Belongs to the peptidase T1B family. HslV subfamily. A double ring-shaped homohexamer of HslV is capped on each side by a ring-shaped HslU homohexamer. The assembly of the HslU/HslV complex is dependent on binding of ATP.

It is found in the cytoplasm. The enzyme catalyses ATP-dependent cleavage of peptide bonds with broad specificity.. With respect to regulation, allosterically activated by HslU binding. Functionally, protease subunit of a proteasome-like degradation complex believed to be a general protein degrading machinery. In Haemophilus influenzae (strain ATCC 51907 / DSM 11121 / KW20 / Rd), this protein is ATP-dependent protease subunit HslV.